The primary structure comprises 121 residues: Holo-[acyl-carrier-protein] synthase (121 aa).

Aspartate 5 and glutamate 50 together coordinate Mg(2+).

This sequence belongs to the P-Pant transferase superfamily. AcpS family. It depends on Mg(2+) as a cofactor.

It is found in the cytoplasm. It carries out the reaction apo-[ACP] + CoA = holo-[ACP] + adenosine 3',5'-bisphosphate + H(+). Its function is as follows. Transfers the 4'-phosphopantetheine moiety from coenzyme A to a Ser of acyl-carrier-protein. This Sulfurimonas denitrificans (strain ATCC 33889 / DSM 1251) (Thiomicrospira denitrificans (strain ATCC 33889 / DSM 1251)) protein is Holo-[acyl-carrier-protein] synthase.